The following is a 326-amino-acid chain: MLTLARQQQRQNIRWLLCLSVLMLLALLLSLCAGEQWILPGDWFSPRGELFVWQIRLPRTLAVLLVGAALAISGAVMQALFENPLAEPGLLGVSNGAGVGLIAAVLLGQGQLPNWALGLCAIAGALIITLILLRFARRHLSTSRLLLAGVALGIICSALMTWAIYFSTSVDLRQLMYWMMGGFGGVDWRQSWLMVALIPVLLWICCQSRPMNMLALGEISARQLGLPLWFWRNVLVAATGWMVGVSVALAGAIGFIGLVIPHILRLCGLTDHRVLLPGCALAGASALLLADIVARLALAAAELPIGVVTATLGAPVFIWLLLKAGR.

The Cytoplasmic portion of the chain corresponds to 1-10 (MLTLARQQQR). The helical transmembrane segment at 11-35 (QNIRWLLCLSVLMLLALLLSLCAGE) threads the bilayer. The Periplasmic segment spans residues 36–56 (QWILPGDWFSPRGELFVWQIR). Residues 57 to 81 (LPRTLAVLLVGAALAISGAVMQALF) traverse the membrane as a helical segment. Over 82 to 92 (ENPLAEPGLLG) the chain is Cytoplasmic. A helical transmembrane segment spans residues 93 to 107 (VSNGAGVGLIAAVLL). Topologically, residues 108 to 113 (GQGQLP) are periplasmic. The helical transmembrane segment at 114–138 (NWALGLCAIAGALIITLILLRFARR) threads the bilayer. Topologically, residues 139–141 (HLS) are cytoplasmic. A helical transmembrane segment spans residues 142–166 (TSRLLLAGVALGIICSALMTWAIYF). The Periplasmic segment spans residues 167–190 (STSVDLRQLMYWMMGGFGGVDWRQ). A helical membrane pass occupies residues 191 to 206 (SWLMVALIPVLLWICC). The Cytoplasmic segment spans residues 207-228 (QSRPMNMLALGEISARQLGLPL). Residues 229–249 (WFWRNVLVAATGWMVGVSVAL) form a helical membrane-spanning segment. Residues 250-257 (AGAIGFIG) lie on the Periplasmic side of the membrane. A helical membrane pass occupies residues 258–267 (LVIPHILRLC). Residues 268–274 (GLTDHRV) lie on the Cytoplasmic side of the membrane. The chain crosses the membrane as a helical span at residues 275–296 (LLPGCALAGASALLLADIVARL). At 297–304 (ALAAAELP) the chain is on the periplasmic side. A helical transmembrane segment spans residues 305 to 324 (IGVVTATLGAPVFIWLLLKA). Residues 325–326 (GR) lie on the Cytoplasmic side of the membrane.

The protein belongs to the binding-protein-dependent transport system permease family. FecCD subfamily. The complex is composed of two ATP-binding proteins (BtuD), two transmembrane proteins (BtuC) and a solute-binding protein (BtuF).

The protein localises to the cell inner membrane. Its function is as follows. Part of the ABC transporter complex BtuCDF involved in vitamin B12 import. Involved in the translocation of the substrate across the membrane. This Escherichia coli O6:H1 (strain CFT073 / ATCC 700928 / UPEC) protein is Vitamin B12 import system permease protein BtuC (btuC).